The chain runs to 328 residues: MTVEKEAPDAHFTVDKQNISLWPREPPPKSGPSLVPGKTPTVRAALICLTLVLVASVLLQAVLYPRFMGTISDVKTNVQLLKGRVDNISTLDSEIKKNSDGMEAAGVQIQMVNESLGYVRSQFLKLKTSVEKANAQIQILTRSWEEVSTLNAQIPELKSDLEKASALNTKIRALQGSLENMSKLLKRQNDILQVVSQGWKYFKGNFYYFSLIPKTWYSAEQFCVSRNSHLTSVTSESEQEFLYKTAGGLIYWIGLTKAGMEGDWSWVDDTPFNKVQSVRFWIPGEPNNAGNNEHCGNIKAPSLQAWNDAPCDKTFLFICKRPYVPSEP.

The Cytoplasmic portion of the chain corresponds to 1 to 43 (MTVEKEAPDAHFTVDKQNISLWPREPPPKSGPSLVPGKTPTVR). A helical; Signal-anchor for type II membrane protein membrane pass occupies residues 44-64 (AALICLTLVLVASVLLQAVLY). Residues 65-328 (PRFMGTISDV…CKRPYVPSEP (264 aa)) lie on the Extracellular side of the membrane. Residues N87, N113, and N180 are each glycosylated (N-linked (GlcNAc...) asparagine). The stretch at 145–190 (EEVSTLNAQIPELKSDLEKASALNTKIRALQGSLENMSKLLKRQND) forms a coiled coil. Residues 202–320 (FKGNFYYFSL…CDKTFLFICK (119 aa)) form the C-type lectin domain. Disulfide bonds link C223-C319 and C295-C311.

Homotrimer. Exclusively expressed by Langerhans cells. Expressed in astrocytoma and malignant ependymoma, but not in normal brain tissues.

It is found in the membrane. Functionally, calcium-dependent lectin displaying mannose-binding specificity. Induces the formation of Birbeck granules (BGs); is a potent regulator of membrane superimposition and zippering. Binds to sulfated as well as mannosylated glycans, keratan sulfate (KS) and beta-glucans. Facilitates uptake of antigens and is involved in the routing and/or processing of antigen for presentation to T cells. Major receptor on primary Langerhans cells for Candida species, Saccharomyces species, and Malassezia furfur. Protects against human immunodeficiency virus-1 (HIV-1) infection. Binds to high-mannose structures present on the envelope glycoprotein which is followed by subsequent targeting of the virus to the Birbeck granules leading to its rapid degradation. The polypeptide is C-type lectin domain family 4 member K (CD207) (Homo sapiens (Human)).